We begin with the raw amino-acid sequence, 126 residues long: Large ribosomal subunit protein bL12 (126 aa).

It belongs to the bacterial ribosomal protein bL12 family. Homodimer. Part of the ribosomal stalk of the 50S ribosomal subunit. Forms a multimeric L10(L12)X complex, where L10 forms an elongated spine to which 2 to 4 L12 dimers bind in a sequential fashion. Binds GTP-bound translation factors.

In terms of biological role, forms part of the ribosomal stalk which helps the ribosome interact with GTP-bound translation factors. Is thus essential for accurate translation. This chain is Large ribosomal subunit protein bL12, found in Rhizobium meliloti (strain 1021) (Ensifer meliloti).